Consider the following 197-residue polypeptide: Holliday junction branch migration complex subunit RuvA (197 aa).

The domain I stretch occupies residues methionine 1–arginine 64. Residues threonine 65–proline 143 are domain II. A flexible linker region spans residues alanine 144–proline 145. A domain III region spans residues alanine 146 to alanine 197.

It belongs to the RuvA family. Homotetramer. Forms an RuvA(8)-RuvB(12)-Holliday junction (HJ) complex. HJ DNA is sandwiched between 2 RuvA tetramers; dsDNA enters through RuvA and exits via RuvB. An RuvB hexamer assembles on each DNA strand where it exits the tetramer. Each RuvB hexamer is contacted by two RuvA subunits (via domain III) on 2 adjacent RuvB subunits; this complex drives branch migration. In the full resolvosome a probable DNA-RuvA(4)-RuvB(12)-RuvC(2) complex forms which resolves the HJ.

The protein localises to the cytoplasm. The RuvA-RuvB-RuvC complex processes Holliday junction (HJ) DNA during genetic recombination and DNA repair, while the RuvA-RuvB complex plays an important role in the rescue of blocked DNA replication forks via replication fork reversal (RFR). RuvA specifically binds to HJ cruciform DNA, conferring on it an open structure. The RuvB hexamer acts as an ATP-dependent pump, pulling dsDNA into and through the RuvAB complex. HJ branch migration allows RuvC to scan DNA until it finds its consensus sequence, where it cleaves and resolves the cruciform DNA. The polypeptide is Holliday junction branch migration complex subunit RuvA (Syntrophobacter fumaroxidans (strain DSM 10017 / MPOB)).